The primary structure comprises 436 residues: MSSRKSKSNSLIHTECLSQVQRILRERFCRQSPHSNLFGVQVQYKHLSELLKRTALHGESNSVLIIGPRGSGKTMLINHALKELMEIEEVSENVLQVHLNGLLQINDKIALKEITRQLNLENVVGDKVFGSFAENLSFLLEALKKGDRTSSCPVIFILDEFDLFAHHKNQTLLYNLFDISQSAQTPIAVIGLTCRLDILELLEKRVKSRFSHRQIHLMNSFGFPQYVKIFKEQLSLPAEFPDKVFAEKWNENVQYLSEDRSVQEVLQKHFNISKNLRSLHMLLMLALNRVTASHPFMTAVDLMEASQLCSMDSKANIVHGLSVLEICLIIAMKHLNDIYEEEPFNFQMVYNEFQKFVQRKAHSVYNFEKPVVMKAFEHLQQLELIKPMERTSGNSQREYQLMKLLLDNTQIMNALQKYPNCPTDVRQWATSSLSWL.

Lys-7 is modified (N6-methyllysine). 67-74 (GPRGSGKT) contacts ATP.

This sequence belongs to the ORC4 family. Component of ORC, a complex composed of at least 6 subunits: ORC1, ORC2, ORC3, ORC4, ORC5 and ORC6. ORC is regulated in a cell-cycle dependent manner. It is sequentially assembled at the exit from anaphase of mitosis and disassembled as cells enter S phase. Interacts with DBF4. Interacts with POLQ.

Its subcellular location is the nucleus. Its function is as follows. Component of the origin recognition complex (ORC) that binds origins of replication. DNA-binding is ATP-dependent. The specific DNA sequences that define origins of replication have not been identified yet. ORC is required to assemble the pre-replication complex necessary to initiate DNA replication. Binds histone H3 and H4 trimethylation marks H3K9me3, H3K27me3 and H4K20me3. This is Origin recognition complex subunit 4 (ORC4) from Homo sapiens (Human).